Reading from the N-terminus, the 249-residue chain is Elongation factor Ts (249 aa).

Positions 82–85 (TDFV) are involved in Mg(2+) ion dislocation from EF-Tu. The tract at residues 215-249 (QAGQLAPEAESTTETADATSETTTEKSSAKKKKKK) is disordered. Residues 222–236 (EAESTTETADATSET) are compositionally biased toward low complexity.

It belongs to the EF-Ts family.

The protein localises to the cytoplasm. Its function is as follows. Associates with the EF-Tu.GDP complex and induces the exchange of GDP to GTP. It remains bound to the aminoacyl-tRNA.EF-Tu.GTP complex up to the GTP hydrolysis stage on the ribosome. The protein is Elongation factor Ts of Rippkaea orientalis (strain PCC 8801 / RF-1) (Cyanothece sp. (strain PCC 8801)).